Here is a 289-residue protein sequence, read N- to C-terminus: 3-methyl-2-oxobutanoate hydroxymethyltransferase (289 aa).

Over residues M1–N15 the composition is skewed to polar residues. A disordered region spans residues M1 to P20. 2 residues coordinate Mg(2+): D67 and D106. 3-methyl-2-oxobutanoate contacts are provided by residues D67 to S68, D106, and K136. Residue E138 coordinates Mg(2+). E205 acts as the Proton acceptor in catalysis.

This sequence belongs to the PanB family. In terms of assembly, homodecamer; pentamer of dimers. Requires Mg(2+) as cofactor.

The protein resides in the cytoplasm. The enzyme catalyses 3-methyl-2-oxobutanoate + (6R)-5,10-methylene-5,6,7,8-tetrahydrofolate + H2O = 2-dehydropantoate + (6S)-5,6,7,8-tetrahydrofolate. It participates in cofactor biosynthesis; (R)-pantothenate biosynthesis; (R)-pantoate from 3-methyl-2-oxobutanoate: step 1/2. Its function is as follows. Catalyzes the reversible reaction in which hydroxymethyl group from 5,10-methylenetetrahydrofolate is transferred onto alpha-ketoisovalerate to form ketopantoate. This chain is 3-methyl-2-oxobutanoate hydroxymethyltransferase, found in Novosphingobium aromaticivorans (strain ATCC 700278 / DSM 12444 / CCUG 56034 / CIP 105152 / NBRC 16084 / F199).